A 229-amino-acid polypeptide reads, in one-letter code: MIKNRDSFLDHVANQLGRPRQTEGVLRPNYRVSPQFEVLKDASKDELVTVLKEQCVAIHTDFKQVESGQLETALDETIDMYGAKSVIAWDDRRFHEFGLGSFLTRPSVSLWDNRDSKRSIEQAEIADVGITFSDITLAESGTVTLFSSNGKGRSVSLLPRYYIAIIPKSTLVARMTQAARHIRQLTGEGRLPSCINFISGPSNSADIEMSLVVGVHGPLKACYIVVDDK.

This sequence belongs to the LutC/YkgG family.

Its function is as follows. Is involved in L-lactate degradation and allows cells to grow with lactate as the sole carbon source. The polypeptide is Lactate utilization protein C (Shouchella clausii (strain KSM-K16) (Alkalihalobacillus clausii)).